The chain runs to 190 residues: Cytoglobin (190 aa).

The disordered stretch occupies residues 1 to 21; it reads MEKVPGDMEIERRERNEELSE. The 150-residue stretch at 18-167 folds into the Globin domain; the sequence is ELSEAERKAV…IYSHVTAAYK (150 aa). An intrachain disulfide couples cysteine 38 to cysteine 83. Histidine 81 and histidine 113 together coordinate heme b.

The protein belongs to the globin family. Monomeric. Homodimer; disulfide-linked in vitro. Also homooligomeric in vitro. In terms of processing, the formation of an intramolecular disulfide bond between cysteines Cys-38 and Cys-83 specifically enhances the nitrite reductase activity. Widely expressed (at protein level).

It is found in the cytoplasm. The protein localises to the nucleus. The enzyme catalyses Fe(II)-heme b-[protein] + nitric oxide + O2 = Fe(III)-heme b-[protein] + nitrate. The catalysed reaction is Fe(III)-heme b-[protein] + nitric oxide + H2O = Fe(II)-heme b-[protein] + nitrite + 2 H(+). It catalyses the reaction 2 superoxide + 2 H(+) = H2O2 + O2. It carries out the reaction H2O2 + AH2 = A + 2 H2O. Its activity is regulated as follows. The nitric oxide dioxygenase activity is activated by a reducing system composed of cytochrome b5, its upstream reductase CYB5R3 and NADH. Its function is as follows. Probable multifunctional globin with a hexacoordinated heme iron required for the catalysis of various reactions depending on redox condition of the cell as well as oxygen availability. Has a nitric oxide dioxygenase (NOD) activity and is most probably involved in cell-mediated and oxygen-dependent nitric oxide consumption. By scavenging this second messenger may regulate several biological processes including endothelium-mediated vasodilation and vascular tone. Under normoxic conditions functions as a nitric oxide dioxygenase (NOD) but under hypoxic conditions the globin may switch its function to that of a nitrite (NO2) reductase (NiR), generating nitric oxide. Could also have peroxidase and superoxide dismutase activities, detoxifying reactive oxygen species and protecting cells against oxidative stress. Also binds dioxygen with low affinity and could function as an oxygen sensor but has probably no function as a respiratory oxygen carrier. The chain is Cytoglobin from Rattus norvegicus (Rat).